Consider the following 133-residue polypeptide: Large-conductance mechanosensitive channel (133 aa).

2 helical membrane passes run Val14 to Leu34 and Gly67 to Val87.

Belongs to the MscL family. As to quaternary structure, homopentamer.

It is found in the cell membrane. In terms of biological role, channel that opens in response to stretch forces in the membrane lipid bilayer. May participate in the regulation of osmotic pressure changes within the cell. The sequence is that of Large-conductance mechanosensitive channel from Bacillus mycoides (strain KBAB4) (Bacillus weihenstephanensis).